Here is a 298-residue protein sequence, read N- to C-terminus: Urease accessory protein UreD (298 aa).

The protein belongs to the UreD family. UreD, UreF and UreG form a complex that acts as a GTP-hydrolysis-dependent molecular chaperone, activating the urease apoprotein by helping to assemble the nickel containing metallocenter of UreC. The UreE protein probably delivers the nickel.

Its subcellular location is the cytoplasm. Its function is as follows. Required for maturation of urease via the functional incorporation of the urease nickel metallocenter. This Frankia alni (strain DSM 45986 / CECT 9034 / ACN14a) protein is Urease accessory protein UreD.